Here is a 302-residue protein sequence, read N- to C-terminus: 4-hydroxy-tetrahydrodipicolinate synthase (302 aa).

Pyruvate is bound at residue Thr-55. Residue Tyr-144 is the Proton donor/acceptor of the active site. Residue Lys-172 is the Schiff-base intermediate with substrate of the active site. Pyruvate is bound at residue Val-214.

This sequence belongs to the DapA family. As to quaternary structure, homotetramer; dimer of dimers.

The protein resides in the cytoplasm. The catalysed reaction is L-aspartate 4-semialdehyde + pyruvate = (2S,4S)-4-hydroxy-2,3,4,5-tetrahydrodipicolinate + H2O + H(+). It functions in the pathway amino-acid biosynthesis; L-lysine biosynthesis via DAP pathway; (S)-tetrahydrodipicolinate from L-aspartate: step 3/4. Its function is as follows. Catalyzes the condensation of (S)-aspartate-beta-semialdehyde [(S)-ASA] and pyruvate to 4-hydroxy-tetrahydrodipicolinate (HTPA). This chain is 4-hydroxy-tetrahydrodipicolinate synthase, found in Prochlorococcus marinus (strain MIT 9303).